The following is a 35-amino-acid chain: Small toxic polypeptide LdrA (35 aa).

Residues 8-28 (MIFWHDLAAPILAGIITAAIV) form a helical membrane-spanning segment.

The protein belongs to the Ldr toxic peptide family.

It is found in the cell inner membrane. Toxic component of a type I toxin-antitoxin (TA) system. Inhibits ATP synthesis possibly due to its insertion in the cell inner membrane, ATP levels drop over 50% 2 minutes after induction. Overexpression is toxic leading to cell death, it inhibits cell growth within 30 minutes; C-terminally tagged versions of the protein are toxic while N-terminally tagged versions are not. The chain is Small toxic polypeptide LdrA (ldrA) from Escherichia coli (strain K12).